Here is a 296-residue protein sequence, read N- to C-terminus: Light-inducible protein CPRF3 (296 aa).

Disordered stretches follow at residues 1–27 (MSDGEEGTPMKHPKPASSVEEAPITTT), 98–165 (PNLA…GSLE), and 190–223 (RVNDERELKRQRRKQSNRESARRSRLRKQAKSDE). Residues 107-117 (VGRKISDEKGR) are compositionally biased toward basic and acidic residues. Over residues 145–156 (SSSDNDCPSLSS) the composition is skewed to low complexity. The bZIP domain occupies 196-259 (ELKRQRRKQS…AEVTSENHSI (64 aa)). Residues 198 to 220 (KRQRRKQSNRESARRSRLRKQAK) are basic motif. The leucine-zipper stretch occupies residues 224-245 (LQERLDNLSKENRILRKNLQRI).

It belongs to the bZIP family. Binds DNA as a dimer.

The protein localises to the nucleus. Binds to the G-box-like motif (5'-ACGTGGC-3') of the chalcone synthase (CHS) gene promoter. G-box and G-box-like motifs are defined in promoters of certain plant genes which are regulated by such diverse stimuli as light-induction or hormone control. This is Light-inducible protein CPRF3 (CPRF3) from Petroselinum crispum (Parsley).